The chain runs to 166 residues: Cytochrome c-type biogenesis protein CcmE (166 aa).

The Cytoplasmic portion of the chain corresponds to 1-7 (MTRKQKR). Residues 8–28 (LALIASGAVVVSLAVGLVMFA) form a helical; Signal-anchor for type II membrane protein membrane-spanning segment. The Periplasmic segment spans residues 29-166 (LRDNIVFFYS…QTAPQGAQAY (138 aa)). Heme-binding residues include His-122 and Tyr-126. Positions 139-166 (GVWQEEGKSEGKPSAIPAQTAPQGAQAY) are disordered.

It belongs to the CcmE/CycJ family.

Its subcellular location is the cell inner membrane. In terms of biological role, heme chaperone required for the biogenesis of c-type cytochromes. Transiently binds heme delivered by CcmC and transfers the heme to apo-cytochromes in a process facilitated by CcmF and CcmH. The chain is Cytochrome c-type biogenesis protein CcmE from Methylocella silvestris (strain DSM 15510 / CIP 108128 / LMG 27833 / NCIMB 13906 / BL2).